The chain runs to 178 residues: PEST proteolytic signal-containing nuclear protein (178 aa).

Residues 1–15 are compositionally biased toward basic and acidic residues; that stretch reads MADGKAGDEKPEKSQ. The disordered stretch occupies residues 1 to 82; that stretch reads MADGKAGDEK…FAIGSQTTKK (82 aa). Ala-2 is subject to N-acetylalanine. Low complexity predominate over residues 37 to 47; it reads SSSNGGESSSR. Phosphoserine is present on Ser-53. Lys-64 is subject to N6-acetyllysine. Residues Ser-77, Ser-87, and Ser-119 each carry the phosphoserine modification. A disordered region spans residues 134–178; sequence NIGRDTPTSAGPNSFNKGKHGFSDNQKLWERNIKSHLGNVHDQDN. The residue at position 139 (Thr-139) is a Phosphothreonine. Polar residues predominate over residues 139–149; the sequence is TPTSAGPNSFN. Ser-147 bears the Phosphoserine mark. An N6-acetyllysine mark is found at Lys-150 and Lys-152. Residues 160–178 show a composition bias toward basic and acidic residues; sequence KLWERNIKSHLGNVHDQDN.

As to quaternary structure, interacts with UHRF2/NIRF. Post-translationally, ubiquitinated; mediated by UHRF2 and leading to its subsequent proteasomal degradation. In terms of processing, N-terminally acetylated in a HYPK-dependent manner by the NatA acetyltransferase complex which is composed of NAA10 and NAA15.

Its subcellular location is the nucleus. Its function is as follows. May be involved in cell cycle regulation. The protein is PEST proteolytic signal-containing nuclear protein (PCNP) of Homo sapiens (Human).